Consider the following 154-residue polypeptide: Fimbrial protein (154 aa).

A propeptide spans 1–6 (MNAQKG) (leader sequence). The residue at position 7 (F7) is an N-methylphenylalanine. Residues 7–29 (FTLIELMIVIAIIGILAAIALPA) form a helical membrane-spanning segment.

It belongs to the N-Me-Phe pilin family. The pili are polar flexible filaments of about 5.4 nanometers diameter and 2.5 micrometers average length; they consist of only a single polypeptide chain arranged in a helical configuration of five subunits per turn in the assembled pilus.

Its subcellular location is the fimbrium. The protein resides in the membrane. The protein is Fimbrial protein (tfpA) of Moraxella nonliquefaciens.